A 579-amino-acid polypeptide reads, in one-letter code: Basic helix-loop-helix ARNT-like protein 2 (579 aa).

The tract at residues 1–198 is interaction with PER2; sequence MEFPRKRRGR…SPREKPIDTK (198 aa). The Nuclear localization signal motif lies at 4-9; sequence PRKRRG. The tract at residues 40 to 61 is disordered; sequence RTGVSAPSGIREAHSQMEKRRR. The 54-residue stretch at 48-101 folds into the bHLH domain; the sequence is GIREAHSQMEKRRRDKMNHLIQKLSSMIPPHIPTAHKLDKLSVLRRAVQYLRSL. A compositionally biased stretch (basic and acidic residues) spans 50-59; it reads REAHSQMEKR. The Nuclear export signal 1 signature appears at 118 to 128; that stretch reads IQDKELSHLIL. Residues 119–190 enclose the PAS 1 domain; the sequence is QDKELSHLIL…KEQLSCDGSP (72 aa). The span at 186–196 shows a compositional bias: basic and acidic residues; the sequence is CDGSPREKPID. Residues 186–213 form a disordered region; it reads CDGSPREKPIDTKTSQVYSHPYTGRPRM. A Glycyl lysine isopeptide (Lys-Gly) (interchain with G-Cter in SUMO2 and SUMO3) cross-link involves residue K226. A Glycyl lysine isopeptide (Lys-Gly) (interchain with G-Cter in SUMO2) cross-link involves residue K233. Residues 296–366 enclose the PAS 2 domain; that stretch reads VPQKSGKINV…DKHKAVLQSK (71 aa). The Nuclear export signal 2 signature appears at 331–339; the sequence is LGYLPQELL. The region spanning 371–414 is the PAC domain; it reads TDSYKFRVKDGAFVTLKSEWFSFTNPWTKELEYIVSVNTLVLGR. Positions 469–536 are disordered; that stretch reads RLHSSSPEDA…AHPHGPLPGD (68 aa).

Component of the circadian core oscillator, which includes the CRY proteins, CLOCK, or NPAS2, BMAL1 or BMAL2, CSNK1D and/or CSNK1E, TIMELESS and the PER proteins. Interacts directly with CLOCK to form the BMAL2-CLOCK transactivator. Can form heterodimers or homodimers which interact directly with CLOCK to form the transcription activator. Interacts with NPAS2 and HIF1A. Interacts with PER2. Expressed in the suprachiasmatic nucleus (SCN).

The protein resides in the nucleus. Transcriptional activator which forms a core component of the circadian clock. The circadian clock, an internal time-keeping system, regulates various physiological processes through the generation of approximately 24 hour circadian rhythms in gene expression, which are translated into rhythms in metabolism and behavior. It is derived from the Latin roots 'circa' (about) and 'diem' (day) and acts as an important regulator of a wide array of physiological functions including metabolism, sleep, body temperature, blood pressure, endocrine, immune, cardiovascular, and renal function. Consists of two major components: the central clock, residing in the suprachiasmatic nucleus (SCN) of the brain, and the peripheral clocks that are present in nearly every tissue and organ system. Both the central and peripheral clocks can be reset by environmental cues, also known as Zeitgebers (German for 'timegivers'). The predominant Zeitgeber for the central clock is light, which is sensed by retina and signals directly to the SCN. The central clock entrains the peripheral clocks through neuronal and hormonal signals, body temperature and feeding-related cues, aligning all clocks with the external light/dark cycle. Circadian rhythms allow an organism to achieve temporal homeostasis with its environment at the molecular level by regulating gene expression to create a peak of protein expression once every 24 hours to control when a particular physiological process is most active with respect to the solar day. Transcription and translation of core clock components (CLOCK, NPAS2, BMAL1, BMAL2, PER1, PER2, PER3, CRY1 and CRY2) plays a critical role in rhythm generation, whereas delays imposed by post-translational modifications (PTMs) are important for determining the period (tau) of the rhythms (tau refers to the period of a rhythm and is the length, in time, of one complete cycle). A diurnal rhythm is synchronized with the day/night cycle, while the ultradian and infradian rhythms have a period shorter and longer than 24 hours, respectively. Disruptions in the circadian rhythms contribute to the pathology of cardiovascular diseases, cancer, metabolic syndromes and aging. A transcription/translation feedback loop (TTFL) forms the core of the molecular circadian clock mechanism. Transcription factors, CLOCK or NPAS2 and BMAL1 or BMAL2, form the positive limb of the feedback loop, act in the form of a heterodimer and activate the transcription of core clock genes and clock-controlled genes (involved in key metabolic processes), harboring E-box elements (5'-CACGTG-3') within their promoters. The core clock genes: PER1/2/3 and CRY1/2 which are transcriptional repressors form the negative limb of the feedback loop and interact with the CLOCK|NPAS2-BMAL1|BMAL2 heterodimer inhibiting its activity and thereby negatively regulating their own expression. This heterodimer also activates nuclear receptors NR1D1/2 and RORA/B/G, which form a second feedback loop and which activate and repress BMAL1 transcription, respectively. The CLOCK-BMAL2 heterodimer activates the transcription of SERPINE1/PAI1 and BHLHE40/DEC1. This is Basic helix-loop-helix ARNT-like protein 2 (Bmal2) from Mus musculus (Mouse).